The sequence spans 141 residues: Ribosome-binding factor A (141 aa).

The protein belongs to the RbfA family. Monomer. Binds 30S ribosomal subunits, but not 50S ribosomal subunits or 70S ribosomes.

The protein resides in the cytoplasm. Its function is as follows. One of several proteins that assist in the late maturation steps of the functional core of the 30S ribosomal subunit. Associates with free 30S ribosomal subunits (but not with 30S subunits that are part of 70S ribosomes or polysomes). Required for efficient processing of 16S rRNA. May interact with the 5'-terminal helix region of 16S rRNA. This chain is Ribosome-binding factor A, found in Afipia carboxidovorans (strain ATCC 49405 / DSM 1227 / KCTC 32145 / OM5) (Oligotropha carboxidovorans).